We begin with the raw amino-acid sequence, 513 residues long: Probable hydrolase YhcX (513 aa).

An N-acetyltransferase domain is found at 14 to 212 (MVIRNIEEKD…YATLMEWNNV (199 aa)). The CN hydrolase domain occupies 229–484 (VRICVIQYEM…EMVVIGDVDL (256 aa)). The active-site Proton acceptor is E270. Residue K345 is the Proton donor of the active site. C379 acts as the Nucleophile in catalysis.

Belongs to the carbon-nitrogen hydrolase superfamily. NIT1/NIT2 family.

The protein is Probable hydrolase YhcX (yhcX) of Bacillus subtilis (strain 168).